The primary structure comprises 125 residues: Temptin (125 aa).

The signal sequence occupies residues 1–22 (MEQKRTLRVFLAVSLLCALANA). 2 cysteine pairs are disulfide-bonded: Cys40/Cys125 and Cys79/Cys99. The segment at 78 to 125 (LCDMDSDGDGRSNGVELGDPECVWSQGETPARTTDLSHPGFDEATVSC) is disordered. Polar residues predominate over residues 103 to 113 (QGETPARTTDL).

In terms of assembly, binds to attractin and enticin. In terms of tissue distribution, produced by the albumen gland of the egg cordons.

It is found in the secreted. Functionally, a component of the complex of water-borne protein pheromones that stimulates attraction and mating behavior. Modulates pheromone signaling by direct binding to attractin. The chain is Temptin from Aplysia californica (California sea hare).